Consider the following 786-residue polypeptide: Ciliated left-right organizer ZP-N domains-containing protein (786 aa).

Positions 1-18 (MWGSVAVVWAICLACIQP) are cleaved as a signal peptide.

Expressed specifically by cells of the ciliated left-right organizer.

Plays a role in left-right patterning process. The polypeptide is Ciliated left-right organizer ZP-N domains-containing protein (Ciroz) (Mus musculus (Mouse)).